The sequence spans 112 residues: uncharacterized protein (112 aa).

The helical transmembrane segment at Ile82–Leu104 threads the bilayer.

The protein resides in the membrane. This is an uncharacterized protein from Pasteurella multocida (strain Pm70).